The chain runs to 73 residues: Putative membrane protein insertion efficiency factor (73 aa).

The protein belongs to the UPF0161 family.

The protein resides in the cell inner membrane. Functionally, could be involved in insertion of integral membrane proteins into the membrane. The polypeptide is Putative membrane protein insertion efficiency factor (Rickettsia bellii (strain RML369-C)).